Consider the following 470-residue polypeptide: ATP synthase subunit beta (470 aa).

Residue 158 to 165 (GGAGVGKT) coordinates ATP.

This sequence belongs to the ATPase alpha/beta chains family. F-type ATPases have 2 components, CF(1) - the catalytic core - and CF(0) - the membrane proton channel. CF(1) has five subunits: alpha(3), beta(3), gamma(1), delta(1), epsilon(1). CF(0) has three main subunits: a(1), b(2) and c(9-12). The alpha and beta chains form an alternating ring which encloses part of the gamma chain. CF(1) is attached to CF(0) by a central stalk formed by the gamma and epsilon chains, while a peripheral stalk is formed by the delta and b chains.

It localises to the cell membrane. The enzyme catalyses ATP + H2O + 4 H(+)(in) = ADP + phosphate + 5 H(+)(out). Produces ATP from ADP in the presence of a proton gradient across the membrane. The catalytic sites are hosted primarily by the beta subunits. The protein is ATP synthase subunit beta of Halalkalibacterium halodurans (strain ATCC BAA-125 / DSM 18197 / FERM 7344 / JCM 9153 / C-125) (Bacillus halodurans).